A 470-amino-acid polypeptide reads, in one-letter code: Uronate isomerase (470 aa).

The protein belongs to the metallo-dependent hydrolases superfamily. Uronate isomerase family.

It carries out the reaction D-glucuronate = D-fructuronate. It catalyses the reaction aldehydo-D-galacturonate = keto-D-tagaturonate. Its pathway is carbohydrate metabolism; pentose and glucuronate interconversion. In Vibrio vulnificus (strain CMCP6), this protein is Uronate isomerase.